A 114-amino-acid chain; its full sequence is UPF0342 protein SE_1526 (114 aa).

Belongs to the UPF0342 family.

This is UPF0342 protein SE_1526 from Staphylococcus epidermidis (strain ATCC 12228 / FDA PCI 1200).